Consider the following 203-residue polypeptide: 3-isopropylmalate dehydratase small subunit (203 aa).

The protein belongs to the LeuD family. LeuD type 1 subfamily. As to quaternary structure, heterodimer of LeuC and LeuD.

It carries out the reaction (2R,3S)-3-isopropylmalate = (2S)-2-isopropylmalate. It participates in amino-acid biosynthesis; L-leucine biosynthesis; L-leucine from 3-methyl-2-oxobutanoate: step 2/4. In terms of biological role, catalyzes the isomerization between 2-isopropylmalate and 3-isopropylmalate, via the formation of 2-isopropylmaleate. This chain is 3-isopropylmalate dehydratase small subunit, found in Symbiobacterium thermophilum (strain DSM 24528 / JCM 14929 / IAM 14863 / T).